The following is a 154-amino-acid chain: Crossover junction endodeoxyribonuclease RuvC (154 aa).

Residues Asp-7, Glu-67, and Asp-139 contribute to the active site. Residues Asp-7, Glu-67, and Asp-139 each contribute to the Mg(2+) site.

The protein belongs to the RuvC family. As to quaternary structure, homodimer which binds Holliday junction (HJ) DNA. The HJ becomes 2-fold symmetrical on binding to RuvC with unstacked arms; it has a different conformation from HJ DNA in complex with RuvA. In the full resolvosome a probable DNA-RuvA(4)-RuvB(12)-RuvC(2) complex forms which resolves the HJ. It depends on Mg(2+) as a cofactor.

Its subcellular location is the cytoplasm. It carries out the reaction Endonucleolytic cleavage at a junction such as a reciprocal single-stranded crossover between two homologous DNA duplexes (Holliday junction).. Its function is as follows. The RuvA-RuvB-RuvC complex processes Holliday junction (HJ) DNA during genetic recombination and DNA repair. Endonuclease that resolves HJ intermediates. Cleaves cruciform DNA by making single-stranded nicks across the HJ at symmetrical positions within the homologous arms, yielding a 5'-phosphate and a 3'-hydroxyl group; requires a central core of homology in the junction. The consensus cleavage sequence is 5'-(A/T)TT(C/G)-3'. Cleavage occurs on the 3'-side of the TT dinucleotide at the point of strand exchange. HJ branch migration catalyzed by RuvA-RuvB allows RuvC to scan DNA until it finds its consensus sequence, where it cleaves and resolves the cruciform DNA. In Prochlorococcus marinus (strain MIT 9313), this protein is Crossover junction endodeoxyribonuclease RuvC.